The chain runs to 166 residues: Large ribosomal subunit protein uL10 (166 aa).

This sequence belongs to the universal ribosomal protein uL10 family. Part of the ribosomal stalk of the 50S ribosomal subunit. The N-terminus interacts with L11 and the large rRNA to form the base of the stalk. The C-terminus forms an elongated spine to which L12 dimers bind in a sequential fashion forming a multimeric L10(L12)X complex.

Forms part of the ribosomal stalk, playing a central role in the interaction of the ribosome with GTP-bound translation factors. This Bacillus mycoides (strain KBAB4) (Bacillus weihenstephanensis) protein is Large ribosomal subunit protein uL10.